The primary structure comprises 461 residues: Chromosomal replication initiator protein DnaA (461 aa).

The tract at residues 1-87 (MAVSLWQQCI…IGSRPSAKPV (87 aa)) is domain I, interacts with DnaA modulators. Residues 87–124 (VVQATAAIRPKPAASKAVEKPTFNAPQAEPAITANHRS) form a domain II region. The domain III, AAA+ region stretch occupies residues 125-341 (NINPTYQFDN…GALNRVIANA (217 aa)). Positions 169, 171, 172, and 173 each coordinate ATP. Residues 342-461 (NFTGRPITID…YANLIRTLSS (120 aa)) form a domain IV, binds dsDNA region.

This sequence belongs to the DnaA family. As to quaternary structure, oligomerizes as a right-handed, spiral filament on DNA at oriC.

It is found in the cytoplasm. Its function is as follows. Plays an essential role in the initiation and regulation of chromosomal replication. ATP-DnaA binds to the origin of replication (oriC) to initiate formation of the DNA replication initiation complex once per cell cycle. Binds the DnaA box (a 9 base pair repeat at the origin) and separates the double-stranded (ds)DNA. Forms a right-handed helical filament on oriC DNA; dsDNA binds to the exterior of the filament while single-stranded (ss)DNA is stabiized in the filament's interior. The ATP-DnaA-oriC complex binds and stabilizes one strand of the AT-rich DNA unwinding element (DUE), permitting loading of DNA polymerase. After initiation quickly degrades to an ADP-DnaA complex that is not apt for DNA replication. Binds acidic phospholipids. The sequence is that of Chromosomal replication initiator protein DnaA from Shewanella piezotolerans (strain WP3 / JCM 13877).